A 375-amino-acid chain; its full sequence is Methylthioribose-1-phosphate isomerase (375 aa).

Residue Asp257 is the Proton donor of the active site.

This sequence belongs to the eIF-2B alpha/beta/delta subunits family. MtnA subfamily.

The protein resides in the cytoplasm. Its subcellular location is the nucleus. It carries out the reaction 5-(methylsulfanyl)-alpha-D-ribose 1-phosphate = 5-(methylsulfanyl)-D-ribulose 1-phosphate. The protein operates within amino-acid biosynthesis; L-methionine biosynthesis via salvage pathway; L-methionine from S-methyl-5-thio-alpha-D-ribose 1-phosphate: step 1/6. Functionally, catalyzes the interconversion of methylthioribose-1-phosphate (MTR-1-P) into methylthioribulose-1-phosphate (MTRu-1-P). The chain is Methylthioribose-1-phosphate isomerase from Leishmania infantum.